Here is a 440-residue protein sequence, read N- to C-terminus: Chromosome partition protein MukF (440 aa).

The segment at 208-236 is leucine-zipper; sequence LSETSGTLRELQDTLEAAGDKLQANLLRI.

Belongs to the MukF family. As to quaternary structure, interacts, and probably forms a ternary complex, with MukE and MukB via its C-terminal region. The complex formation is stimulated by calcium or magnesium. It is required for an interaction between MukE and MukB.

It is found in the cytoplasm. The protein localises to the nucleoid. Involved in chromosome condensation, segregation and cell cycle progression. May participate in facilitating chromosome segregation by condensation DNA from both sides of a centrally located replisome during cell division. Not required for mini-F plasmid partitioning. Probably acts via its interaction with MukB and MukE. Overexpression results in anucleate cells. It has a calcium binding activity. In Escherichia coli O17:K52:H18 (strain UMN026 / ExPEC), this protein is Chromosome partition protein MukF.